Consider the following 193-residue polypeptide: tRNA(Phe) 7-((3-amino-3-carboxypropyl)-4-demethylwyosine(37)-N(4))-methyltransferase (193 aa).

It belongs to the TYW3 family.

The enzyme catalyses 4-demethyl-7-[(3S)-3-amino-3-carboxypropyl]wyosine(37) in tRNA(Phe) + S-adenosyl-L-methionine = 7-[(3S)-3-amino-3-carboxypropyl]wyosine(37) in tRNA(Phe) + S-adenosyl-L-homocysteine + H(+). In terms of biological role, S-adenosyl-L-methionine-dependent methyltransferase that acts as a component of the wyosine derivatives biosynthesis pathway. Probably methylates N-4 position of wybutosine-86 to produce wybutosine-72. The chain is tRNA(Phe) 7-((3-amino-3-carboxypropyl)-4-demethylwyosine(37)-N(4))-methyltransferase from Methanocaldococcus jannaschii (strain ATCC 43067 / DSM 2661 / JAL-1 / JCM 10045 / NBRC 100440) (Methanococcus jannaschii).